A 249-amino-acid chain; its full sequence is UPF0758 protein BMEI0718 (249 aa).

Positions 1–34 (MAKKKDTPGDGEFPGFSDTLQRTPKLEKPHYAGH) are disordered. Basic and acidic residues predominate over residues 24-34 (PKLEKPHYAGH). The MPN domain occupies 127–249 (VLGSWDKVIN…HASLRSLRLI (123 aa)). Positions 198, 200, and 211 each coordinate Zn(2+). The JAMM motif signature appears at 198–211 (HNHPSGDPTPSRAD).

It belongs to the UPF0758 family.

This chain is UPF0758 protein BMEI0718, found in Brucella melitensis biotype 1 (strain ATCC 23456 / CCUG 17765 / NCTC 10094 / 16M).